Here is a 361-residue protein sequence, read N- to C-terminus: 3-dehydroquinate synthase (361 aa).

NAD(+)-binding positions include 72 to 77, 130 to 131, lysine 142, and lysine 151; these read SGEKEK and TT. Glutamate 184, histidine 247, and histidine 264 together coordinate Zn(2+).

Belongs to the sugar phosphate cyclases superfamily. Dehydroquinate synthase family. The cofactor is Co(2+). Requires Zn(2+) as cofactor. It depends on NAD(+) as a cofactor.

The protein localises to the cytoplasm. It carries out the reaction 7-phospho-2-dehydro-3-deoxy-D-arabino-heptonate = 3-dehydroquinate + phosphate. Its pathway is metabolic intermediate biosynthesis; chorismate biosynthesis; chorismate from D-erythrose 4-phosphate and phosphoenolpyruvate: step 2/7. Catalyzes the conversion of 3-deoxy-D-arabino-heptulosonate 7-phosphate (DAHP) to dehydroquinate (DHQ). This is 3-dehydroquinate synthase from Bacillus cereus (strain B4264).